The sequence spans 184 residues: Ribosome-recycling factor (184 aa).

It belongs to the RRF family.

It is found in the cytoplasm. Responsible for the release of ribosomes from messenger RNA at the termination of protein biosynthesis. May increase the efficiency of translation by recycling ribosomes from one round of translation to another. In Fervidobacterium nodosum (strain ATCC 35602 / DSM 5306 / Rt17-B1), this protein is Ribosome-recycling factor.